Here is a 158-residue protein sequence, read N- to C-terminus: GTP-dependent dephospho-CoA kinase (158 aa).

The GTP site is built by D35, V36, D54, K56, E109, and D132.

It belongs to the GTP-dependent DPCK family.

It catalyses the reaction 3'-dephospho-CoA + GTP = GDP + CoA + H(+). The protein operates within cofactor biosynthesis; coenzyme A biosynthesis. In terms of biological role, catalyzes the GTP-dependent phosphorylation of the 3'-hydroxyl group of dephosphocoenzyme A to form coenzyme A (CoA). The chain is GTP-dependent dephospho-CoA kinase from Methanococcus maripaludis (strain DSM 14266 / JCM 13030 / NBRC 101832 / S2 / LL).